The sequence spans 410 residues: MRRMLINAIEIKKLRIALIDGQQLYDLNVENIDKKQRKSNIYKGKIVRIEPSLEAAFVDYGEKKNGFLPLKEISRNYFPNNCSNYRHLHIKNILKEGQECIVQIDKEERGTKGALLTTFISLAGNYLVLMPNCPHLEGISRKIEGIDRFHLKKIISMLMVPENMGIIIRTSGVGRSIETLQLDLNFRVKNWYTIKKSAEINTAPCLIHKESNIVIRTLRDYLKKDIQEIIVDNPEILELARDYMFNMNCSYFEKKIKLYTGSDPLFSYYKIESQINALLRRIVKLPSGGSIIIDYTEALTAIDINSSQSTKGVNIEETAFNTNYEAVREIARQLRLRDLGGLIVIDFIDMSVLKHQKMIELHLHQVLQKDRARVQVGSISQFGLLEMSRQCLGSPLKKINHNYLFEMQKC.

One can recognise an S1 motif domain in the interval 39–119 (SNIYKGKIVR…GTKGALLTTF (81 aa)). D303 and D346 together coordinate Mg(2+).

Belongs to the RNase E/G family. RNase E subfamily. In terms of assembly, component of the RNA degradosome, which is a multiprotein complex involved in RNA processing and mRNA degradation. Within the RNA degradosome, RNase E assembles into a homotetramer formed by a dimer of dimers. Mg(2+) is required as a cofactor.

The protein localises to the cytoplasm. It localises to the cell inner membrane. It catalyses the reaction Endonucleolytic cleavage of single-stranded RNA in A- and U-rich regions.. Its function is as follows. Endoribonuclease that plays a central role in RNA processing and decay. Required for the maturation of 5S and 16S rRNAs and the majority of tRNAs. Also involved in the degradation of most mRNAs. The chain is Putative ribonuclease E (rne) from Buchnera aphidicola subsp. Baizongia pistaciae (strain Bp).